The sequence spans 370 residues: UDP-N-acetylglucosamine--N-acetylmuramyl-(pentapeptide) pyrophosphoryl-undecaprenol N-acetylglucosamine transferase (370 aa).

UDP-N-acetyl-alpha-D-glucosamine-binding positions include 20–22 (TAG), asparagine 134, arginine 170, serine 204, isoleucine 257, and glutamine 301.

The protein belongs to the glycosyltransferase 28 family. MurG subfamily.

Its subcellular location is the cell membrane. The enzyme catalyses di-trans,octa-cis-undecaprenyl diphospho-N-acetyl-alpha-D-muramoyl-L-alanyl-D-glutamyl-meso-2,6-diaminopimeloyl-D-alanyl-D-alanine + UDP-N-acetyl-alpha-D-glucosamine = di-trans,octa-cis-undecaprenyl diphospho-[N-acetyl-alpha-D-glucosaminyl-(1-&gt;4)]-N-acetyl-alpha-D-muramoyl-L-alanyl-D-glutamyl-meso-2,6-diaminopimeloyl-D-alanyl-D-alanine + UDP + H(+). It participates in cell wall biogenesis; peptidoglycan biosynthesis. Its function is as follows. Cell wall formation. Catalyzes the transfer of a GlcNAc subunit on undecaprenyl-pyrophosphoryl-MurNAc-pentapeptide (lipid intermediate I) to form undecaprenyl-pyrophosphoryl-MurNAc-(pentapeptide)GlcNAc (lipid intermediate II). The sequence is that of UDP-N-acetylglucosamine--N-acetylmuramyl-(pentapeptide) pyrophosphoryl-undecaprenol N-acetylglucosamine transferase from Corynebacterium jeikeium (strain K411).